The primary structure comprises 318 residues: Protein FdhE homolog (318 aa).

This sequence belongs to the FdhE family.

Its subcellular location is the cytoplasm. Functionally, necessary for formate dehydrogenase activity. The protein is Protein FdhE homolog of Pseudomonas putida (strain ATCC 47054 / DSM 6125 / CFBP 8728 / NCIMB 11950 / KT2440).